The primary structure comprises 460 residues: Signal recognition particle 54 kDa protein (460 aa).

Residues 104–111 (GLQGSGKT), 184–188 (DTAGR), and 242–245 (TKLD) contribute to the GTP site.

Belongs to the GTP-binding SRP family. SRP54 subfamily. As to quaternary structure, part of the signal recognition particle protein translocation system, which is composed of SRP and FtsY. Archaeal SRP consists of a 7S RNA molecule of 300 nucleotides and two protein subunits: SRP54 and SRP19.

It is found in the cytoplasm. The enzyme catalyses GTP + H2O = GDP + phosphate + H(+). In terms of biological role, involved in targeting and insertion of nascent membrane proteins into the cytoplasmic membrane. Binds to the hydrophobic signal sequence of the ribosome-nascent chain (RNC) as it emerges from the ribosomes. The SRP-RNC complex is then targeted to the cytoplasmic membrane where it interacts with the SRP receptor FtsY. The sequence is that of Signal recognition particle 54 kDa protein from Halobacterium salinarum (strain ATCC 29341 / DSM 671 / R1).